Here is a 362-residue protein sequence, read N- to C-terminus: Adenosine deaminase (362 aa).

2 residues coordinate Zn(2+): His19 and His21. Positions 21, 23, and 181 each coordinate substrate. His208 is a binding site for Zn(2+). The Proton donor role is filled by Glu211. Zn(2+) is bound at residue Asp300.

Belongs to the metallo-dependent hydrolases superfamily. Adenosine and AMP deaminases family. Adenosine deaminase subfamily. Requires Zn(2+) as cofactor.

The enzyme catalyses adenosine + H2O + H(+) = inosine + NH4(+). It catalyses the reaction 2'-deoxyadenosine + H2O + H(+) = 2'-deoxyinosine + NH4(+). Its function is as follows. Catalyzes the hydrolytic deamination of adenosine and 2-deoxyadenosine. The sequence is that of Adenosine deaminase from Mycobacterium ulcerans (strain Agy99).